Here is a 1431-residue protein sequence, read N- to C-terminus: Zinc finger protein 687b (1431 aa).

Disordered stretches follow at residues 24-481 (KEAI…RPLK) and 504-538 (KGGA…TTAG). Low complexity predominate over residues 61-73 (SPSPSTDSQSDPS). Polar residues predominate over residues 103 to 122 (GFVSSGGSVHMSQSRGQPNG). Low complexity-rich tracts occupy residues 174–188 (MQLL…EMNL), 196–209 (APAN…AASP), and 217–248 (LLST…ASSP). The span at 249-267 (LATSLTEPFNGTPRLSSSA) shows a compositional bias: polar residues. Low complexity predominate over residues 311-324 (SQSPSIPPSTSISP). Residues 342 to 359 (RAQQNWLSTAAQTGNGKS) are compositionally biased toward polar residues. The segment covering 361–377 (PQEERNPEHVIEERDSP) has biased composition (basic and acidic residues). Residues 385 to 410 (PKSSMPTSAVTKRSCSPAAASSPSAA) show a composition bias toward low complexity. Positions 438 to 449 (DGGKGDTDKIEV) are enriched in basic and acidic residues. A compositionally biased stretch (gly residues) spans 519–528 (QTGGRAGPVK). The C2H2-type 1; degenerate zinc finger occupies 674–692 (YRCLECGDSFALERSLARH). Positions 754-816 (TTPIGMLSPS…GPQSPQALMP (63 aa)) are disordered. The segment covering 760-775 (LSPSLSSPPLTSSTTP) has biased composition (low complexity). Positions 781–802 (APSTSSPLKDSPSPGTASTQPS) are enriched in polar residues. A C2H2-type 2; degenerate zinc finger spans residues 830–853 (FKCPECQAQFLSKAELVTHFQQIR). 4 consecutive C2H2-type zinc fingers follow at residues 919-942 (YRCS…QTAH), 947-970 (HKCP…TSQH), 982-1004 (YKCV…FDTH), and 1013-1036 (FKCP…KTAH). A disordered region spans residues 1041-1120 (VKAETPPTTS…QVSSPESGNM (80 aa)). The segment covering 1043-1057 (AETPPTTSSPVSAPA) has biased composition (low complexity). The span at 1058-1075 (GNSTSKPKPATENNSDEL) shows a compositional bias: polar residues. Over residues 1080–1111 (GEEEEEGEDEEGEQEGEEREDEEEEENEEEEQ) the composition is skewed to acidic residues. The segment at 1122-1145 (WRCKECKKRFPEREDYIDHMKNEH) adopts a C2H2-type 7 zinc-finger fold. Residues 1205–1227 (WHCSEGKRTFSSRLILEKHIRVR) form a C2H2-type 8; degenerate zinc finger. Residues 1225 to 1310 (RVRHGIRSRQ…EEEDGTFRCT (86 aa)) form a disordered region. 2 consecutive C2H2-type zinc fingers follow at residues 1307 to 1329 (FRCT…IPVH) and 1337 to 1360 (QQCL…FITH). Residues 1362-1392 (LRQGQHDRNASPGASPQYGSPSSPKAGEDGD) form a disordered region. A compositionally biased stretch (polar residues) spans 1373–1384 (PGASPQYGSPSS). The C2H2-type 11 zinc-finger motif lies at 1395–1425 (VSCRVCGRRFDKASDLNTHFRTHGMAFITAH).

It belongs to the krueppel C2H2-type zinc-finger protein family. In terms of tissue distribution, widely expressed with highest levels in eye, spleen and ovary.

Its subcellular location is the nucleus. Its function is as follows. May be involved in transcriptional regulation. In Danio rerio (Zebrafish), this protein is Zinc finger protein 687b (znf687b).